Reading from the N-terminus, the 194-residue chain is Cytochrome bo(3) ubiquinol oxidase subunit 3 (194 aa).

Residues 1–18 (MKKKYKIDTNIFSKELLG) are Cytoplasmic-facing. A helical membrane pass occupies residues 19 to 41 (FWLYLMSDCIIFCTLFSVYFILV). The Extracellular segment spans residues 42–55 (DNVAQGPSGHNIFQ). A helical membrane pass occupies residues 56-78 (NNLIIIETFLLLFSSFSCNLVLF). At 79–84 (EMKNKN) the chain is on the cytoplasmic side. A helical transmembrane segment spans residues 85–107 (LYMVFLWLGITFLLGLLFVFLEL). The Extracellular segment spans residues 108–126 (FEFFHLINLGFGPTRSGFL). A helical membrane pass occupies residues 127-149 (SSFFVLIATHGIHVISGLIWIIV). Residues 150–169 (MIKYVYTFNITNLIYYRMLC) lie on the Cytoplasmic side of the membrane. A helical transmembrane segment spans residues 170-192 (LNLFWHFLDIVWVFIFSFVYLFG). Residues 193 to 194 (MV) are Extracellular-facing.

This sequence belongs to the cytochrome c oxidase subunit 3 family. In terms of assembly, heterooctamer of two A chains, two B chains, two C chains and two D chains.

It is found in the cell membrane. Its function is as follows. Cytochrome bo(3) ubiquinol terminal oxidase is the component of the aerobic respiratory chain of E.coli that predominates when cells are grown at high aeration. Has proton pump activity across the membrane in addition to electron transfer, pumping 2 protons/electron. This Buchnera aphidicola subsp. Baizongia pistaciae (strain Bp) protein is Cytochrome bo(3) ubiquinol oxidase subunit 3 (cyoC).